The primary structure comprises 318 residues: uncharacterized protein (318 aa).

This sequence belongs to the glycosyltransferase 2 family.

This is an uncharacterized protein from Rickettsia prowazekii (strain Madrid E).